Consider the following 385-residue polypeptide: MNPVPAQREYFLDSIRAWLMLLGIPFHISLIYSSHTWHVNSAEPSLWLTLFNDFIHSFRMQVFFVISGYFSYMLFLRYPLKKWWKVRVERVGIPMLTAIPLLTLPQFIMLQYVKGKAESWPGLSLYDKYNTLAWELISHLWFLLVLVVMTTLCVWIFKRIRNNLENSDKTNKKFSMVKLSVIFLCLGIGYAVIRRTIFIVYPPILSNGMFNFIVMQTLFYLPFFILGALAFIFPHHKALFTTPSRGCTLAAALAFVAYLLNQRYGSGDAWMYETESVITMVLGLWMVNVVFSFGHRLLNFQSARVTYFVNASLFIYLVHHPLTLFFGAYITPHITSNWLGFLCGLIFVVGIAIILYEIHLRIPLLKFLFSGKPVVKRENDKAPAR.

The next 10 membrane-spanning stretches (helical) occupy residues 17 to 37, 60 to 80, 91 to 111, 137 to 157, 173 to 193, 212 to 232, 239 to 259, 274 to 294, 311 to 331, and 338 to 358; these read AWLMLLGIPFHISLIYSSHTW, MQVFFVISGYFSYMLFLRYPL, VGIPMLTAIPLLTLPQFIMLQ, ISHLWFLLVLVVMTTLCVWIF, KFSMVKLSVIFLCLGIGYAVI, FIVMQTLFYLPFFILGALAFI, LFTTPSRGCTLAAALAFVAYL, TESVITMVLGLWMVNVVFSFG, ASLFIYLVHHPLTLFFGAYIT, and WLGFLCGLIFVVGIAIILYEI.

Belongs to the acyltransferase 3 family. OpgC subfamily.

It localises to the cell membrane. The protein operates within glycan metabolism; osmoregulated periplasmic glucan (OPG) biosynthesis. In terms of biological role, necessary for the succinyl substitution of periplasmic glucans. Could catalyze the transfer of succinyl residues from the cytoplasmic side of the membrane to the nascent glucan backbones on the periplasmic side of the membrane. The polypeptide is Glucans biosynthesis protein C (Escherichia coli O139:H28 (strain E24377A / ETEC)).